A 359-amino-acid chain; its full sequence is Glycerol-3-phosphate dehydrogenase [NAD(P)+] (359 aa).

NADPH-binding residues include Thr11, Trp12, Arg32, and Lys107. Lys107 and Gly138 together coordinate sn-glycerol 3-phosphate. Ala142 lines the NADPH pocket. Sn-glycerol 3-phosphate-binding residues include Lys193, Asp246, Ser256, Arg257, and Asn258. Lys193 serves as the catalytic Proton acceptor. Arg257 is a binding site for NADPH. NADPH-binding residues include Val281 and Glu283.

This sequence belongs to the NAD-dependent glycerol-3-phosphate dehydrogenase family.

Its subcellular location is the cytoplasm. The catalysed reaction is sn-glycerol 3-phosphate + NAD(+) = dihydroxyacetone phosphate + NADH + H(+). It catalyses the reaction sn-glycerol 3-phosphate + NADP(+) = dihydroxyacetone phosphate + NADPH + H(+). It participates in membrane lipid metabolism; glycerophospholipid metabolism. In terms of biological role, catalyzes the reduction of the glycolytic intermediate dihydroxyacetone phosphate (DHAP) to sn-glycerol 3-phosphate (G3P), the key precursor for phospholipid synthesis. The protein is Glycerol-3-phosphate dehydrogenase [NAD(P)+] of Dehalococcoides mccartyi (strain ATCC BAA-2100 / JCM 16839 / KCTC 5957 / BAV1).